The sequence spans 112 residues: Protein BEX5 (112 aa).

Composition is skewed to basic and acidic residues over residues 1-12 (MEKDPKERREEE) and 30-51 (PKPR…REDM). The disordered stretch occupies residues 1-56 (MEKDPKERREEEQAPVQNEEACPMGGGEGPKPRENVRGDWDPPAQDFREDMPNGLV). A his cluster region spans residues 101–105 (HHDHH). Residue Cys109 participates in Zn(2+) binding.

It belongs to the BEX family. Post-translationally, ubiquitinated. Degraded by the proteasome.

It localises to the cytoplasm. This Bos taurus (Bovine) protein is Protein BEX5 (BEX5).